A 257-amino-acid chain; its full sequence is Early E1A protein (257 aa).

Disordered stretches follow at residues 26–46 and 75–103; these read NATM…PSLH and LAAE…EKEI. The interaction with RB1 in competition with E2F1 stretch occupies residues 43 to 51; sequence PSLHDLYDL. Low complexity predominate over residues 75 to 91; sequence LAAEEASSPSSDSDSSL. Positions 79 to 144 are interaction with UBE2I; that stretch reads EASSPSSDSD…ASHGVQAVSE (66 aa). Over residues 94 to 103 the composition is skewed to basic and acidic residues; that stretch reads PRHDRGEKEI. Positions 104–108 match the PXLXP motif, interaction with host ZMYND11 motif; sequence PGLKW. An LXCXE motif, interaction with host RB1 and TMEM173/STING motif is present at residues 113–117; that stretch reads LRCYE. A zinc finger spans residues 158-178; that stretch reads CKSCEFHRINTGDKAVLCALC. A disordered region spans residues 191–221; that stretch reads VSDADDETPTTESTLSPPEIGTSPSDNIVRP. A compositionally biased stretch (low complexity) spans 200-209; that stretch reads TTESTLSPPE. A PXDLS motif, CTBP-binding motif is present at residues 246-250; that stretch reads PLDLC. The short motif at 252–257 is the Nuclear localization signal element; that stretch reads RKRPRH.

The protein belongs to the adenoviridae E1A protein family. As to quaternary structure, interacts with host UBE2I; this interaction interferes with polySUMOylation. Interacts with host RB1; this interaction induces the aberrant dissociation of RB1-E2F1 complex thereby disrupting the activity of RB1 and activating E2F1-regulated genes. Interacts with host ATF7; the interaction enhances ATF7-mediated viral transactivation activity which requires the zinc binding domains of both proteins. Isoform early E1A 32 kDa protein and isoform early E1A 26 kDa protein interact (via N-terminus) with CUL1 and E3 ubiquitin ligase RBX1; these interactions inhibit RBX1-CUL1-dependent elongation reaction of ubiquitin chains and attenuate ubiquitination of SCF(FBXW7) target proteins. Interacts (via PXLXP motif) with host ZMYND11/BS69 (via MYND-type zinc finger); this interaction inhibits E1A mediated transactivation. Interacts with host EP300; this interaction stimulates the acetylation of RB1 by recruiting EP300 and RB1 into a multimeric-protein complex. Interacts with host CTBP1 and CTBP2; this interaction seems to potentiate viral replication. Interacts with host DCAF7. Interacts with host DYRK1A. Interacts with host KPNA4; this interaction allows E1A import into the host nucleus. Interacts with host EP400; this interaction stabilizes MYC. Interacts with host TBP protein; this interaction probably disrupts the TBP-TATA complex. Interacts (via LXCXE motif) with host TMEM173/STING; this interaction impairs the ability of TMEM173/STING to sense cytosolic DNA and promote the production of type I interferon (IFN-alpha and IFN-beta). Interacts (via C-terminus) with host ZBED1/hDREF (via C-terminus); the interaction is direct.

The protein resides in the host nucleus. In terms of biological role, plays a role in viral genome replication by driving entry of quiescent cells into the cell cycle. Stimulation of progression from G1 to S phase allows the virus to efficiently use the cellular DNA replicating machinery to achieve viral genome replication. E1A protein has both transforming and trans-activating activities. Induces the disassembly of the E2F1 transcription factor from RB1 by direct competition for the same binding site on RB1, with subsequent transcriptional activation of E2F1-regulated S-phase genes and of the E2 region of the adenoviral genome. Release of E2F1 leads to the ARF-mediated inhibition of MDM2 and causes TP53/p53 to accumulate because it is not targeted for degradation by MDM2-mediated ubiquitination anymore. This increase in TP53, in turn, would arrest the cell proliferation and direct its death but this effect is counteracted by the viral protein E1B-55K. Inactivation of the ability of RB1 to arrest the cell cycle is critical for cellular transformation, uncontrolled cellular growth and proliferation induced by viral infection. Interaction with RBX1 and CUL1 inhibits ubiquitination of the proteins targeted by SCF(FBXW7) ubiquitin ligase complex, and may be linked to unregulated host cell proliferation. The tumorigenesis-restraining activity of E1A may be related to the disruption of the host CtBP-CtIP complex through the CtBP binding motif. Interaction with host TMEM173/STING impairs the ability of TMEM173/STING to sense cytosolic DNA and promote the production of type I interferon (IFN-alpha and IFN-beta). Promotes the sumoylation of host ZBED1/hDREF with SUMO1. This Human adenovirus E serotype 4 (HAdV-4) protein is Early E1A protein.